A 140-amino-acid chain; its full sequence is uncharacterized protein (140 aa).

The N-linked (GlcNAc...) asparagine glycan is linked to Asn-27. 3 consecutive transmembrane segments (helical) span residues 45-65 (FSLYWTLIFNGAFYVTAGVYA), 76-96 (VWIFVMYVLYGGVQGLTTGTV), and 116-136 (VPLCCAVVQILFDVVLSYSMV).

It belongs to the TMEM170 family.

Its subcellular location is the membrane. This is an uncharacterized protein from Saccharomyces cerevisiae (strain ATCC 204508 / S288c) (Baker's yeast).